The sequence spans 738 residues: MRLLLLLVGLSTLLNHSYTQNCKTPCLPNAKCEVLDEVAACFCSTGYTGNGITICEDVDECNETSVCGDHAVCENTNGGFSCFCVEGYQTSTGKTQFTPNDGSYCQDVDECNETSVCGDHAVCENTNGGFSCFCVEGYQTSTGKTQFTPNDGSYCQEIVNSNCHLEHDCIAANINKTLKRIGPITEQLTLLHEIYKNSEAELSLVDIVTYIEILTESSSLQGYIKNTTSPKDAYFGSALTEFGKTVNNFVEKNTHEMWDQLPTNRRRLHLTKLMHAAEHVTLQISQNIQKNTQFDMNSTDLALKVFVFDSVHMKHTHPHMNVDGGYVKISPRRKSAYDPNGNVIVAFLCYRSIGPLLSSSDDFLLGAQSDNSKGKEKVISSVISASISSNPPTLYELEKITFTLSHVKLSDKHQTQCAFWNYSVDDMNNGSWSSEGCELTYSNDTHTSCRCSHLTHFAILMSPSTSIEVKDYNILTRITQLGIIISLICLAICIFTFWFFSEIQSTRTTIHKNLCCSLFLAQLVFLVGININTNKLVCSIIAGLLHYFFLAAFAWMCIEGIYLYLIVVGLIYNKGFLHKNFYIFGYLSPAVVVGFSASLGYRYYGTTKVCWLSTENNFIWSFIGPACLIILVNLLAFGVIIYKVFRHTAGLKPEVSCYENIRSCARGALALLFLLGTTWTFGVLHVVHASVVTAYLFTVSNAFQGMFIFLFLCVLSRKIQEEYYRLFKNVPCCFECLR.

A signal peptide spans 1–19; the sequence is MRLLLLLVGLSTLLNHSYT. The 37-residue stretch at 20–56 folds into the EGF-like 1 domain; that stretch reads QNCKTPCLPNAKCEVLDEVAACFCSTGYTGNGITICE. The Extracellular segment spans residues 20–480; the sequence is QNCKTPCLPN…DYNILTRITQ (461 aa). 9 disulfides stabilise this stretch: C22–C32, C26–C41, C43–C55, C61–C73, C67–C82, C84–C105, C111–C123, C117–C132, and C134–C155. Residues 57–106 form the EGF-like 2; calcium-binding domain; the sequence is DVDECNETSVCGDHAVCENTNGGFSCFCVEGYQTSTGKTQFTPNDGSYCQ. N-linked (GlcNAc...) asparagine glycosylation is present at N62. Positions 107 to 156 constitute an EGF-like 3; calcium-binding domain; the sequence is DVDECNETSVCGDHAVCENTNGGFSCFCVEGYQTSTGKTQFTPNDGSYCQ. An N-linked (GlcNAc...) asparagine glycan is attached at N112. N-linked (GlcNAc...) asparagine glycosylation is found at N175, N226, N297, N421, N429, and N443. One can recognise a GAIN-B domain in the interval 292 to 467; sequence TQFDMNSTDL…AILMSPSTSI (176 aa). 2 cysteine pairs are disulfide-bonded: C417-C449 and C437-C451. Residues 417–467 are GPS; it reads CAFWNYSVDDMNNGSWSSEGCELTYSNDTHTSCRCSHLTHFAILMSPSTSI. The helical transmembrane segment at 481-501 threads the bilayer; the sequence is LGIIISLICLAICIFTFWFFS. Topologically, residues 502-522 are cytoplasmic; that stretch reads EIQSTRTTIHKNLCCSLFLAQ. The chain crosses the membrane as a helical span at residues 523 to 543; the sequence is LVFLVGININTNKLVCSIIAG. The Extracellular segment spans residues 544-547; that stretch reads LLHY. Residues 548–568 form a helical membrane-spanning segment; sequence FFLAAFAWMCIEGIYLYLIVV. Topologically, residues 569-580 are cytoplasmic; sequence GLIYNKGFLHKN. The chain crosses the membrane as a helical span at residues 581–601; it reads FYIFGYLSPAVVVGFSASLGY. Over 602–621 the chain is Extracellular; it reads RYYGTTKVCWLSTENNFIWS. A helical transmembrane segment spans residues 622 to 642; sequence FIGPACLIILVNLLAFGVIIY. Topologically, residues 643-666 are cytoplasmic; sequence KVFRHTAGLKPEVSCYENIRSCAR. Residues 667-687 form a helical membrane-spanning segment; it reads GALALLFLLGTTWTFGVLHVV. The Extracellular portion of the chain corresponds to 688-694; sequence HASVVTA. A helical transmembrane segment spans residues 695–715; it reads YLFTVSNAFQGMFIFLFLCVL. The Cytoplasmic portion of the chain corresponds to 716–738; that stretch reads SRKIQEEYYRLFKNVPCCFECLR.

It belongs to the G-protein coupled receptor 2 family. Adhesion G-protein coupled receptor (ADGR) subfamily. As to quaternary structure, heterodimer of 2 chains generated by proteolytic processing; the large extracellular N-terminal fragment and the membrane-bound C-terminal fragment predominantly remain associated and non-covalently linked. Proteolytically cleaved into 2 subunits, an extracellular alpha subunit and a seven-transmembrane subunit. In terms of processing, glycosylated. Abundantly expressed in heart, lung, and kidney. Less evident expression is observed in brain, skeletal muscle, liver and spleen. No expression is detected in testis.

The protein localises to the cell membrane. In terms of biological role, endothelial orphan receptor that acts as a key regulator of angiogenesis. The sequence is that of Adhesion G protein-coupled receptor L4 (Adgrl4) from Rattus norvegicus (Rat).